We begin with the raw amino-acid sequence, 336 residues long: MKVYYDQDADLSRITSRRVAIIGYGSQGHAHANNLKESGVNVVVGLRPGSSSAAKAQEAGLEVASVEEATQGADVVMMLVPDEAAPDIYNQQVAPNLKDGAAIAFAHGFNIHYGQIQPAADHDVIMIAPKGPGHTVRSTYVAGAGVPSLIAIEQDASGQAKEIALAYAVANGGGRSGIIETSFREETETDLFGEQTVLCGGIAALIEAGFETLVEAGYAPEMAYFECLHETKLIVDLLYEGGLANMRYSVSNTAEYGDFTRGPRVINEESREAMREILEEIQNGDFAKEYVLENKAGAPTLHARRRLAAEHPIEEVGERLRGMMPWIAANKLVDRD.

In terms of domain architecture, KARI N-terminal Rossmann spans 1–181 (MKVYYDQDAD…GGGRSGIIET (181 aa)). Residues 24 to 27 (YGSQ), Arg47, Ser50, and Ser52 contribute to the NADP(+) site. The active site involves His107. Gly133 lines the NADP(+) pocket. The KARI C-terminal knotted domain occupies 182–327 (SFREETETDL…ERLRGMMPWI (146 aa)). Asp190, Glu194, Glu226, and Glu230 together coordinate Mg(2+). Ser251 provides a ligand contact to substrate.

This sequence belongs to the ketol-acid reductoisomerase family. Mg(2+) is required as a cofactor.

It carries out the reaction (2R)-2,3-dihydroxy-3-methylbutanoate + NADP(+) = (2S)-2-acetolactate + NADPH + H(+). The catalysed reaction is (2R,3R)-2,3-dihydroxy-3-methylpentanoate + NADP(+) = (S)-2-ethyl-2-hydroxy-3-oxobutanoate + NADPH + H(+). Its pathway is amino-acid biosynthesis; L-isoleucine biosynthesis; L-isoleucine from 2-oxobutanoate: step 2/4. The protein operates within amino-acid biosynthesis; L-valine biosynthesis; L-valine from pyruvate: step 2/4. Functionally, involved in the biosynthesis of branched-chain amino acids (BCAA). Catalyzes an alkyl-migration followed by a ketol-acid reduction of (S)-2-acetolactate (S2AL) to yield (R)-2,3-dihydroxy-isovalerate. In the isomerase reaction, S2AL is rearranged via a Mg-dependent methyl migration to produce 3-hydroxy-3-methyl-2-ketobutyrate (HMKB). In the reductase reaction, this 2-ketoacid undergoes a metal-dependent reduction by NADPH to yield (R)-2,3-dihydroxy-isovalerate. In Halorhodospira halophila (strain DSM 244 / SL1) (Ectothiorhodospira halophila (strain DSM 244 / SL1)), this protein is Ketol-acid reductoisomerase (NADP(+)).